Consider the following 750-residue polypeptide: Photosystem I P700 chlorophyll a apoprotein A1 (750 aa).

The next 8 membrane-spanning stretches (helical) occupy residues 70 to 93, 156 to 179, 195 to 219, 291 to 309, 346 to 369, 385 to 411, 433 to 455, and 531 to 549; these read VFSA…FHGA, LYCT…FHYH, LNHH…HVSL, IAHH…GHMY, WHAQ…HHMY, LSLF…IFMV, AIIS…LYIH, and FLVH…LILL. The [4Fe-4S] cluster site is built by Cys573 and Cys582. The next 2 membrane-spanning stretches (helical) occupy residues 589 to 610 and 664 to 686; these read HVFL…HFSW and LSAY…MFLF. His675 is a binding site for chlorophyll a'. Residues Met683 and Tyr691 each contribute to the chlorophyll a site. Residue Trp692 participates in phylloquinone binding. Residues 724–744 form a helical membrane-spanning segment; that stretch reads AVGVTHYLLGGIATTWAFFLA.

The protein belongs to the PsaA/PsaB family. The PsaA/B heterodimer binds the P700 chlorophyll special pair and subsequent electron acceptors. PSI consists of a core antenna complex that captures photons, and an electron transfer chain that converts photonic excitation into a charge separation. The eukaryotic PSI reaction center is composed of at least 11 subunits. P700 is a chlorophyll a/chlorophyll a' dimer, A0 is one or more chlorophyll a, A1 is one or both phylloquinones and FX is a shared 4Fe-4S iron-sulfur center. serves as cofactor.

It is found in the plastid. The protein resides in the chloroplast thylakoid membrane. It carries out the reaction reduced [plastocyanin] + hnu + oxidized [2Fe-2S]-[ferredoxin] = oxidized [plastocyanin] + reduced [2Fe-2S]-[ferredoxin]. In terms of biological role, psaA and PsaB bind P700, the primary electron donor of photosystem I (PSI), as well as the electron acceptors A0, A1 and FX. PSI is a plastocyanin-ferredoxin oxidoreductase, converting photonic excitation into a charge separation, which transfers an electron from the donor P700 chlorophyll pair to the spectroscopically characterized acceptors A0, A1, FX, FA and FB in turn. Oxidized P700 is reduced on the lumenal side of the thylakoid membrane by plastocyanin. This chain is Photosystem I P700 chlorophyll a apoprotein A1, found in Panax ginseng (Korean ginseng).